A 230-amino-acid chain; its full sequence is V-type proton ATPase subunit E1 (230 aa).

Residue M1 is modified to N-acetylmethionine. The stretch at R8–K67 forms a coiled coil. The residue at position 178 (S178) is a Phosphoserine.

Belongs to the V-ATPase E subunit family. In terms of assembly, V-ATPase is a heteromultimeric enzyme composed of a peripheral catalytic V1 complex (components A to H) attached to an integral membrane V0 proton pore complex (components: a, c, c'', d and e).

The protein localises to the vacuole membrane. Subunit of the peripheral V1 complex of vacuolar ATPase essential for assembly or catalytic function. V-ATPase is responsible for acidifying a variety of intracellular compartments in eukaryotic cells. Required for Golgi organization and vacuole function in embryogenesis. The chain is V-type proton ATPase subunit E1 (VHA-E1) from Arabidopsis thaliana (Mouse-ear cress).